A 365-amino-acid polypeptide reads, in one-letter code: Holliday junction branch migration complex subunit RuvB (365 aa).

Positions 1 to 191 (MNFDPIDDFD…FGFTAHMDFY (191 aa)) are large ATPase domain (RuvB-L). ATP is bound by residues Leu-30, Arg-31, Gly-72, Lys-75, Thr-76, Ser-77, 138 to 140 (EDF), Arg-181, Tyr-191, and Arg-228. Thr-76 is a binding site for Mg(2+). The interval 192–262 (EPEELQQILM…VAQAALAVYD (71 aa)) is small ATPAse domain (RuvB-S). Residues 265-365 (QLGLDRLDRS…QATLFDPNGE (101 aa)) form a head domain (RuvB-H) region. DNA is bound by residues Arg-320 and Arg-325.

It belongs to the RuvB family. Homohexamer. Forms an RuvA(8)-RuvB(12)-Holliday junction (HJ) complex. HJ DNA is sandwiched between 2 RuvA tetramers; dsDNA enters through RuvA and exits via RuvB. An RuvB hexamer assembles on each DNA strand where it exits the tetramer. Each RuvB hexamer is contacted by two RuvA subunits (via domain III) on 2 adjacent RuvB subunits; this complex drives branch migration. In the full resolvosome a probable DNA-RuvA(4)-RuvB(12)-RuvC(2) complex forms which resolves the HJ.

Its subcellular location is the cytoplasm. It catalyses the reaction ATP + H2O = ADP + phosphate + H(+). Functionally, the RuvA-RuvB-RuvC complex processes Holliday junction (HJ) DNA during genetic recombination and DNA repair, while the RuvA-RuvB complex plays an important role in the rescue of blocked DNA replication forks via replication fork reversal (RFR). RuvA specifically binds to HJ cruciform DNA, conferring on it an open structure. The RuvB hexamer acts as an ATP-dependent pump, pulling dsDNA into and through the RuvAB complex. RuvB forms 2 homohexamers on either side of HJ DNA bound by 1 or 2 RuvA tetramers; 4 subunits per hexamer contact DNA at a time. Coordinated motions by a converter formed by DNA-disengaged RuvB subunits stimulates ATP hydrolysis and nucleotide exchange. Immobilization of the converter enables RuvB to convert the ATP-contained energy into a lever motion, pulling 2 nucleotides of DNA out of the RuvA tetramer per ATP hydrolyzed, thus driving DNA branch migration. The RuvB motors rotate together with the DNA substrate, which together with the progressing nucleotide cycle form the mechanistic basis for DNA recombination by continuous HJ branch migration. Branch migration allows RuvC to scan DNA until it finds its consensus sequence, where it cleaves and resolves cruciform DNA. The protein is Holliday junction branch migration complex subunit RuvB of Rhodococcus erythropolis (strain PR4 / NBRC 100887).